The following is a 794-amino-acid chain: Lon protease (794 aa).

The Lon N-terminal domain occupies Val-13–Val-204. Gly-356–Thr-363 is a binding site for ATP. The 182-residue stretch at Lys-592–Pro-773 folds into the Lon proteolytic domain. Residues Ser-679 and Lys-722 contribute to the active site. A compositionally biased stretch (low complexity) spans Thr-774 to Ala-788. Residues Thr-774–Gln-794 form a disordered region.

Belongs to the peptidase S16 family. As to quaternary structure, homohexamer. Organized in a ring with a central cavity.

It localises to the cytoplasm. It catalyses the reaction Hydrolysis of proteins in presence of ATP.. In terms of biological role, ATP-dependent serine protease that mediates the selective degradation of mutant and abnormal proteins as well as certain short-lived regulatory proteins. Required for cellular homeostasis and for survival from DNA damage and developmental changes induced by stress. Degrades polypeptides processively to yield small peptide fragments that are 5 to 10 amino acids long. Binds to DNA in a double-stranded, site-specific manner. In Citrifermentans bemidjiense (strain ATCC BAA-1014 / DSM 16622 / JCM 12645 / Bem) (Geobacter bemidjiensis), this protein is Lon protease.